The following is a 634-amino-acid chain: Chaperone protein DnaK (634 aa).

Thr-199 is subject to Phosphothreonine; by autocatalysis. The span at 601–618 (AAAGQAQAESGAGAQGNA) shows a compositional bias: low complexity. The tract at residues 601–634 (AAAGQAQAESGAGAQGNAKPDDVVDAEFEEVDKK) is disordered. Positions 623 to 634 (VVDAEFEEVDKK) are enriched in acidic residues.

It belongs to the heat shock protein 70 family.

In terms of biological role, acts as a chaperone. The protein is Chaperone protein DnaK of Acidithiobacillus ferrooxidans (strain ATCC 23270 / DSM 14882 / CIP 104768 / NCIMB 8455) (Ferrobacillus ferrooxidans (strain ATCC 23270)).